The sequence spans 141 residues: Hemoglobin subunit alpha-2 (141 aa).

The Globin domain maps to 1–141 (VLTEDDKNHV…VCKDLVSKYR (141 aa)). Residue H58 participates in O2 binding. Residue H87 coordinates heme b.

This sequence belongs to the globin family. As to quaternary structure, the major hemoglobin component (HbIII) is a heterotetramer of two alpha-2 chains and two beta-1 chains. As to expression, red blood cells.

Its function is as follows. Involved in oxygen transport from the lung to the various peripheral tissues. This is Hemoglobin subunit alpha-2 from Varanus albigularis (White-throated monitor).